The following is a 737-amino-acid chain: Catalase-peroxidase (737 aa).

Positions 1–32 (MSKENMSNEGKCPFNHGAAGTNQSSGRGTSNK) are disordered. Residues 20–32 (GTNQSSGRGTSNK) show a composition bias toward polar residues. The tryptophyl-tyrosyl-methioninium (Trp-Tyr) (with M-252) cross-link spans 103–226 (WHSAGTYRTA…LAAVQMGLIY (124 aa)). Catalysis depends on histidine 104, which acts as the Proton acceptor. A cross-link (tryptophyl-tyrosyl-methioninium (Tyr-Met) (with W-103)) is located at residues 226 to 252 (YVNPEGPEGKPDTLASARDIRDTFGRM). Histidine 267 lines the heme b pocket.

The protein belongs to the peroxidase family. Peroxidase/catalase subfamily. Homodimer or homotetramer. The cofactor is heme b. Formation of the three residue Trp-Tyr-Met cross-link is important for the catalase, but not the peroxidase activity of the enzyme.

The enzyme catalyses H2O2 + AH2 = A + 2 H2O. It catalyses the reaction 2 H2O2 = O2 + 2 H2O. Functionally, bifunctional enzyme with both catalase and broad-spectrum peroxidase activity. In Marinomonas sp. (strain MWYL1), this protein is Catalase-peroxidase.